The following is a 163-amino-acid chain: Lipoprotein signal peptidase (163 aa).

Helical transmembrane passes span 4–24 (SAALFCRPVPAILFILSLLIL), 66–86 (LDAWVIVVMRLAIVAFVAWLW), and 92–112 (DHQFAHLGYCLIIAGAFGNII). Active-site residues include Asp122 and Asp140. Residues 132 to 152 (SFAVFNLADSLITIGAGFILL) form a helical membrane-spanning segment.

This sequence belongs to the peptidase A8 family.

Its subcellular location is the cell inner membrane. The enzyme catalyses Release of signal peptides from bacterial membrane prolipoproteins. Hydrolyzes -Xaa-Yaa-Zaa-|-(S,diacylglyceryl)Cys-, in which Xaa is hydrophobic (preferably Leu), and Yaa (Ala or Ser) and Zaa (Gly or Ala) have small, neutral side chains.. It functions in the pathway protein modification; lipoprotein biosynthesis (signal peptide cleavage). Its function is as follows. This protein specifically catalyzes the removal of signal peptides from prolipoproteins. This Allorhizobium ampelinum (strain ATCC BAA-846 / DSM 112012 / S4) (Agrobacterium vitis (strain S4)) protein is Lipoprotein signal peptidase.